A 552-amino-acid chain; its full sequence is Hydroxylamine reductase (552 aa).

4 residues coordinate [2Fe-2S] cluster: C5, C8, C20, and C27. Hybrid [4Fe-2O-2S] cluster is bound by residues H251, E275, C319, C407, C435, C460, E494, and K496. C407 carries the post-translational modification Cysteine persulfide.

The protein belongs to the HCP family. The cofactor is [2Fe-2S] cluster. Hybrid [4Fe-2O-2S] cluster is required as a cofactor.

The protein localises to the cytoplasm. The enzyme catalyses A + NH4(+) + H2O = hydroxylamine + AH2 + H(+). Functionally, catalyzes the reduction of hydroxylamine to form NH(3) and H(2)O. The polypeptide is Hydroxylamine reductase (Shigella boydii serotype 4 (strain Sb227)).